A 439-amino-acid polypeptide reads, in one-letter code: Aspartate--tRNA(Asp/Asn) ligase (439 aa).

Glu177 is an L-aspartate binding site. An aspartate region spans residues 199-202 (QLYK). Residue Arg221 coordinates L-aspartate. ATP contacts are provided by residues 221-223 (RAE), 229-231 (RHL), and Glu362. Residues Glu362 and Ser365 each contribute to the Mg(2+) site. Residues Ser365 and Arg369 each coordinate L-aspartate. 410–413 (GADR) provides a ligand contact to ATP.

This sequence belongs to the class-II aminoacyl-tRNA synthetase family. Type 2 subfamily. As to quaternary structure, homodimer. It depends on Mg(2+) as a cofactor.

The protein resides in the cytoplasm. It carries out the reaction tRNA(Asx) + L-aspartate + ATP = L-aspartyl-tRNA(Asx) + AMP + diphosphate. Aspartyl-tRNA synthetase with relaxed tRNA specificity since it is able to aspartylate not only its cognate tRNA(Asp) but also tRNA(Asn). Reaction proceeds in two steps: L-aspartate is first activated by ATP to form Asp-AMP and then transferred to the acceptor end of tRNA(Asp/Asn). In Methanosphaera stadtmanae (strain ATCC 43021 / DSM 3091 / JCM 11832 / MCB-3), this protein is Aspartate--tRNA(Asp/Asn) ligase.